Reading from the N-terminus, the 161-residue chain is Nucleotide-binding protein GM21_0633 (161 aa).

Belongs to the YajQ family.

Its function is as follows. Nucleotide-binding protein. This is Nucleotide-binding protein GM21_0633 from Geobacter sp. (strain M21).